The following is a 599-amino-acid chain: Fumarate reductase flavoprotein subunit (599 aa).

FAD is bound by residues 12 to 16, 36 to 38, 44 to 52, 156 to 158, and Asp212; these read GAGGG, VSK, THTVAAEGG, and HFV. His45 carries the tele-8alpha-FAD histidine modification. Residues His233 and Arg249 contribute to the active site. FAD contacts are provided by residues 357–358, Glu381, and 392–398; these read HY and RLGSNSL.

Belongs to the FAD-dependent oxidoreductase 2 family. FRD/SDH subfamily. In terms of assembly, part of an enzyme complex containing four subunits: a flavoprotein (FrdA), an iron-sulfur protein (FrdB), and two hydrophobic anchor proteins (FrdC and FrdD). Requires FAD as cofactor.

It localises to the cell inner membrane. The catalysed reaction is a quinone + succinate = fumarate + a quinol. It carries out the reaction a menaquinone + succinate = a menaquinol + fumarate. The sequence is that of Fumarate reductase flavoprotein subunit (frdA) from Haemophilus influenzae (strain ATCC 51907 / DSM 11121 / KW20 / Rd).